The chain runs to 1313 residues: MGAASGQRGRWPLSPPLLMLSLLLLLLLPPSPAPALDPGLQPGNFSADEAGAQLFADSYNSSAEVVMFQSTAASWAHDTNITEENARLQEEAALINQEFAEVWGKKAKELYESIWQNFTDQKLRRIIGSVQTLGPANLPLTQRLQYNSLLSNMSRIYSTGKVCFPNKTATCWSLDPELTNILASSRNYAKVLFAWEGWHDAVGIPLRPLYQDFTALSNEAYRQDGFSDTGAYWRSWYESPSFEESLEHLYHQVEPLYLNLHAFVRRALHRRYGDKYINLRGPIPAHLLGDMWAQSWENIYDMVVPFPDKPNLDVTSTMVQKGWNATHMFRVAEEFFTSLGLSPMPPEFWAESMLEKPADGREVVCHASAWDFYNRKDFRIKQCTRVTMDQLSTVHHEMGHVQYYLQYKDLHVSLRRGANPGFHEAIGDVLALSVSTPAHLHKIGLLDRVANDIESDINYLLKMALEKIAFLPFGYLVDQWRWGVFSGRTPPSRYNYDWWYLRTKYQGICPPVARNETHFDAGAKFHIPSVTPYIRYFVSFVLQFQFHQALCKEAGHQGPLHQCDIYQSTKAGAKLQQVLQAGCSRPWQEVLKDLVGSDALDASALMEYFQPVSQWLQEQNQRNGEVLGWPEYQWRPPLPDNYPEGIDLETDEAKANRFVEEYDRTAKVLWNEYAEANWHYNTNITIEGSKILLQKNKEVSNHTLKYGTWAKTFDVSNFQNSTIKRIIKKVQNVDRAVLPPNELEEYNQILLDMETTYSVANVCYTNGTCLSLEPDLTNIMATSRKYEELLWVWKSWRDKVGRAILPFFPKYVDFSNKIAKLNGYSDAGDSWRSSYESDDLEQDLEKLYQELQPLYLNLHAYVRRSLHRHYGSEYINLDGPIPAHLLGNMWAQTWSNIYDLVAPFPSAPSIDATEAMIKQGWTPRRIFKEADNFFTSLGLLPVPPEFWNKSMLEKPTDGREVVCHASAWDFYNGKDFRIKQCTSVNMEELVIAHHEMGHIQYFMQYKDLPVTFREGANPGFHEAIGDVLALSVSTPKHLHSLNLLSSEGSGYEHDINFLMKMALDKIAFIPFSYLIDQWRWRVFDGSITKENYNQEWWSLRLKYQGLCPPVPRSQGDFDPGSKFHVPANVPYIRYFISFIIQFQFHEALCRAAGHTGPLYKCDIYQSKEAGKLLADAMKLGYSKQWPEAMKIITGQPNMSASAIMNYFKPLTEWLVTENRRHGETLGWPEYTWTPNTARAEGSLPESSRVNFLGMYLEPQQARVGQWVLLFLGVALLVATVGLAHRLYNIHNHHSLRRPHRGPQFGSEVELRHS.

Residues 1–35 form the signal peptide; the sequence is MGAASGQRGRWPLSPPLLMLSLLLLLLLPPSPAPA. Residues 36–1265 lie on the Extracellular side of the membrane; it reads LDPGLQPGNF…LEPQQARVGQ (1230 aa). 6 N-linked (GlcNAc...) asparagine glycosylation sites follow: N44, N60, N80, N117, N152, and N166. 2 consecutive Peptidase M2 domains span residues 46-630 and 649-1228; these read SADE…LGWP and ETDE…LGWP. C163 and C171 are joined by a disulfide. Y237 serves as a coordination point for chloride. An N-linked (GlcNAc...) asparagine glycan is attached at N324. Cysteines 365 and 383 form a disulfide. H396 contacts Zn(2+). E397 functions as the Proton acceptor 1 in the catalytic mechanism. Zn(2+) contacts are provided by H400 and E424. N-linked (GlcNAc...) asparagine glycosylation occurs at N515. H526 functions as the Proton donor 1 in the catalytic mechanism. Residue R535 participates in chloride binding. C551 and C563 are disulfide-bonded. Residues N683, N701, N720, and N766 are each glycosylated (N-linked (GlcNAc...) asparagine). C763 and C769 form a disulfide bridge. 2 residues coordinate chloride: R797 and Y835. A glycan (N-linked (GlcNAc...) asparagine) is linked at N948. A disulfide bridge connects residues C963 and C981. Zn(2+) is bound at residue H994. The Proton acceptor 2 role is filled by E995. The Zn(2+) site is built by H998 and E1022. Positions 1096 and 1100 each coordinate chloride. Catalysis depends on H1124, which acts as the Proton donor 2. Position 1133 (R1133) interacts with chloride. Residues C1149 and C1161 are joined by a disulfide bond. N1197 is a glycosylation site (N-linked (GlcNAc...) asparagine). Positions 1221–1262 are juxtamembrane stalk; the sequence is HGETLGWPEYTWTPNTARAEGSLPESSRVNFLGMYLEPQQAR. Residues 1266 to 1282 traverse the membrane as a helical segment; it reads WVLLFLGVALLVATVGL. Residues 1283 to 1313 are Cytoplasmic-facing; sequence AHRLYNIHNHHSLRRPHRGPQFGSEVELRHS. S1306 is subject to Phosphoserine.

Belongs to the peptidase M2 family. As to quaternary structure, monomer and homodimer; homodimerizes following binding to an inhibitor. Interacts with calmodulin (CALM1, CALM2 or CALM3); interaction takes place in the cytoplasmic region and regulates phosphorylation and proteolytic cleavage. Zn(2+) serves as cofactor. Requires chloride as cofactor. Produced following proteolytic cleavage by secretase enzymes that cleave the transmembrane form in the juxtamembrane stalk region upstream of the transmembrane region. Cleavage can take place at different sites of the juxtamembrane stalk region. Post-translationally, phosphorylated by CK2 on Ser-1306; which allows membrane retention. Phosphorylated on tyrosine residues on its extracellular part, promoting cleavage by secretase enzymes and formation of the soluble form (Angiotensin-converting enzyme, soluble form). Expressed in brain, kidney, lung, skeletal muscle and heart. As to expression, testis-specific isoform is expressed in spermatocytes, adult testis.

It is found in the cell membrane. It localises to the cytoplasm. Its subcellular location is the secreted. It carries out the reaction Release of a C-terminal dipeptide, oligopeptide-|-Xaa-Yaa, when Xaa is not Pro, and Yaa is neither Asp nor Glu. Thus, conversion of angiotensin I to angiotensin II, with increase in vasoconstrictor activity, but no action on angiotensin II.. It catalyses the reaction angiotensin I + H2O = L-histidyl-L-leucine + angiotensin II. The catalysed reaction is bradykinin + H2O = L-Phe-L-Arg + bradykinin(1-7). The enzyme catalyses substance P + H2O = substance P(1-9) + L-Leu-L-Met-NH2. It carries out the reaction substance P + H2O = substance P(1-8) + Gly-L-Leu-L-Met-NH2. It catalyses the reaction substance P + H2O = L-Phe-L-Phe-Gly-L-Leu-L-Met-NH2 + substance P(1-6). The catalysed reaction is neurotensin + H2O = neurotensin(1-11) + L-isoleucyl-L-leucine. The enzyme catalyses goralatide + H2O = N-acetyl-L-seryl-L-aspartate + L-lysyl-L-proline. It carries out the reaction Met-enkephalin + H2O = L-phenylalanyl-L-methionine + L-tyrosylglycylglycine. It catalyses the reaction Leu-enkephalin + H2O = L-tyrosylglycylglycine + L-phenylalanyl-L-leucine. The catalysed reaction is Met-enkephalin-Arg-Phe + H2O = L-arginyl-L-phenylalanine + Met-enkephalin. With respect to regulation, the dipeptidyl carboxypeptidase activity is strongly activated by chloride. The dipeptidyl carboxypeptidase activity is specifically inhibited by lisinopril, captopril and enalaprilat. Its activity is regulated as follows. Strongly inhibited by lisinopril and captopril. Its function is as follows. Dipeptidyl carboxypeptidase that removes dipeptides from the C-terminus of a variety of circulating hormones, such as angiotensin I, bradykinin or enkephalins, thereby playing a key role in the regulation of blood pressure, electrolyte homeostasis or synaptic plasticity. Composed of two similar catalytic domains, each possessing a functional active site, with different selectivity for substrates. Plays a major role in the angiotensin-renin system that regulates blood pressure and sodium retention by the kidney by converting angiotensin I to angiotensin II, resulting in an increase of the vasoconstrictor activity of angiotensin. Also able to inactivate bradykinin, a potent vasodilator, and therefore enhance the blood pressure response. Acts as a regulator of synaptic transmission by mediating cleavage of neuropeptide hormones, such as substance P, neurotensin or enkephalins. Catalyzes degradation of different enkephalin neuropeptides (Met-enkephalin, Leu-enkephalin, Met-enkephalin-Arg-Phe and possibly Met-enkephalin-Arg-Gly-Leu). Acts as a regulator of synaptic plasticity in the nucleus accumbens of the brain by mediating cleavage of Met-enkephalin-Arg-Phe, a strong ligand of Mu-type opioid receptor OPRM1, into Met-enkephalin. Met-enkephalin-Arg-Phe cleavage by ACE decreases activation of OPRM1, leading to long-term synaptic potentiation of glutamate release. Also acts as a regulator of hematopoietic stem cell differentiation by mediating degradation of hemoregulatory peptide N-acetyl-SDKP (AcSDKP). Acts as a regulator of cannabinoid signaling pathway by mediating degradation of hemopressin, an antagonist peptide of the cannabinoid receptor CNR1. Involved in amyloid-beta metabolism by catalyzing degradation of Amyloid-beta protein 40 and Amyloid-beta protein 42 peptides, thereby preventing plaque formation. Catalyzes cleavage of cholecystokinin (maturation of Cholecystokinin-8 and Cholecystokinin-5) and Gonadoliberin-1 (both maturation and degradation) hormones. Degradation of hemoregulatory peptide N-acetyl-SDKP (AcSDKP) and amyloid-beta proteins is mediated by the N-terminal catalytic domain, while angiotensin I and cholecystokinin cleavage is mediated by the C-terminal catalytic region. In terms of biological role, soluble form that is released in blood plasma and other body fluids following proteolytic cleavage in the juxtamembrane stalk region. Isoform produced by alternative promoter usage that is specifically expressed in spermatocytes and adult testis, and which is required for male fertility. In contrast to somatic isoforms, only contains one catalytic domain. Acts as a dipeptidyl carboxypeptidase that removes dipeptides from the C-terminus of substrates. The identity of substrates that are needed for male fertility is unknown. May also have a glycosidase activity which releases GPI-anchored proteins from the membrane by cleaving the mannose linkage in the GPI moiety. The GPIase activity was reported to be essential for the egg-binding ability of the sperm. This activity is however unclear and has been challenged by other groups, suggesting that it may be indirect. This Rattus norvegicus (Rat) protein is Angiotensin-converting enzyme.